A 436-amino-acid chain; its full sequence is Retinoic acid receptor RXR (436 aa).

A disordered region spans residues 1–108 (MDRSEGMDTL…GPSPSPGLPH (108 aa)). Residues 1 to 116 (MDRSEGMDTL…PHSSLHTKHI (116 aa)) form a modulating region. Residues 13–22 (SMPSGMSMGM) show a composition bias toward low complexity. Composition is skewed to polar residues over residues 40–49 (SSLTSPTSTH) and 62–76 (MASS…QQMH). Positions 85–98 (SSMGSPPMLCLSPS) are enriched in low complexity. 2 consecutive NR C4-type zinc fingers follow at residues 117 to 137 (CAIC…CEGC) and 153 to 172 (CRDD…CQYC). A DNA-binding region (nuclear receptor) is located at residues 117–182 (CAICGDRASG…RYMKCLSMGM (66 aa)). The tract at residues 183 to 206 (KREAVQEERQRVKEKGDGEVESTS) is hinge. Residues 189–200 (EERQRVKEKGDG) are compositionally biased toward basic and acidic residues. The tract at residues 189–209 (EERQRVKEKGDGEVESTSGAN) is disordered. Residues 209–432 (NNDMPVEQIL…TFLMEMLENP (224 aa)) enclose the NR LBD domain. 9-cis-retinoate-binding residues include Arg-290 and Ala-301.

Belongs to the nuclear hormone receptor family. NR2 subfamily. In terms of assembly, homodimer (via ligand-binding domain). Heterodimer. Homotetramer consisting of 2 canonical homodimers. Within the tetramer, each monomer binds one molecule of 9C-RA and a NCOA1-derived peptide containing an L-X(2)-L-L motif.

The protein resides in the nucleus. Functionally, ligand-dependent transcription factor probably involved in the retinoic acid response pathway. Binds 9-cis-retinoic acid (9C-RA) and, to a lesser extent, docosahexaenoic acid (DHA), phytanic acid, methoprene acid and oleic acid. Binds to double-stranded DNA sequences containing direct repeats (DR) with the consensus sequence 5'-[AG]GGTCA-3' and 1, 2, 3, 4 or 5 nucleotides in between (DR1, DR2, DR3. DR4 and DR5, respectively). Binding to DR1 is strongest. Transactivates gene expression when 9C-RA or DHA is bound. The polypeptide is Retinoic acid receptor RXR (Biomphalaria glabrata (Bloodfluke planorb)).